We begin with the raw amino-acid sequence, 500 residues long: Transcription termination factor MTERF8, chloroplastic (500 aa).

The transit peptide at M1 to R64 directs the protein to the chloroplast.

This sequence belongs to the mTERF family.

The protein localises to the plastid. It is found in the chloroplast. Its function is as follows. Transcription termination factor that is transcriptionally active in chloroplasts. The polypeptide is Transcription termination factor MTERF8, chloroplastic (Arabidopsis thaliana (Mouse-ear cress)).